The primary structure comprises 399 residues: MDLKITNGFYDPSHLSYEVVERKGLGHPDTLADGIAEQIEIDYSLYCLDKFGVIPHHNFDKIIIRGGHSVQDFGGSDFIEPIKIIFLGRASKKCFNSSIPLFKIQKKAATKYLNRILPNLDVENYVEFETLTSDFTTKTNWFSPEAIEDLPEYLDVPKANDTATMISYWPLTISEELALMIEGYFYKLDKNELPTPRFTKMGGDIKVMVVRNDLEYSIRINFPLISKFFNNDIESQLYVDKHVEKIKKYIEQKYKNISFSIDYHYYLTTTGSCIDFGEEGAVGRGNKTHGIISSFRPNTMEAPAGKNCTYFVGKVWGFLSDTIAKEIYEAFNTPCQIIMQLNIGSKLYRPTHLFIQTEESVDQERVLEIVNRHLNNGKQNTNLILSTQHFIPKTNVYDG.

This sequence belongs to the AdoMet synthetase 2 family.

This is an uncharacterized protein from Streptococcus pyogenes serotype M1.